The primary structure comprises 109 residues: UPF0060 membrane protein PSPA7_1846 (109 aa).

4 consecutive transmembrane segments (helical) span residues 5–25, 27–47, 59–79, and 84–104; these read LWFV…YLWL, LGKS…FALL, AYAA…AFVE, and LWSD…VLFG.

This sequence belongs to the UPF0060 family.

The protein resides in the cell inner membrane. This chain is UPF0060 membrane protein PSPA7_1846, found in Pseudomonas paraeruginosa (strain DSM 24068 / PA7) (Pseudomonas aeruginosa (strain PA7)).